Consider the following 424-residue polypeptide: Serine--tRNA ligase 1 (424 aa).

232–234 (TAE) contributes to the L-serine binding site. 263–265 (RSE) contributes to the ATP binding site. Position 286 (E286) interacts with L-serine. 350–353 (EISS) contacts ATP. L-serine is bound at residue S386.

This sequence belongs to the class-II aminoacyl-tRNA synthetase family. Type-1 seryl-tRNA synthetase subfamily. As to quaternary structure, homodimer. The tRNA molecule binds across the dimer.

It localises to the cytoplasm. The enzyme catalyses tRNA(Ser) + L-serine + ATP = L-seryl-tRNA(Ser) + AMP + diphosphate + H(+). The catalysed reaction is tRNA(Sec) + L-serine + ATP = L-seryl-tRNA(Sec) + AMP + diphosphate + H(+). Its pathway is aminoacyl-tRNA biosynthesis; selenocysteinyl-tRNA(Sec) biosynthesis; L-seryl-tRNA(Sec) from L-serine and tRNA(Sec): step 1/1. Catalyzes the attachment of serine to tRNA(Ser). Is also able to aminoacylate tRNA(Sec) with serine, to form the misacylated tRNA L-seryl-tRNA(Sec), which will be further converted into selenocysteinyl-tRNA(Sec). The polypeptide is Serine--tRNA ligase 1 (Clostridium acetobutylicum (strain ATCC 824 / DSM 792 / JCM 1419 / IAM 19013 / LMG 5710 / NBRC 13948 / NRRL B-527 / VKM B-1787 / 2291 / W)).